Here is a 337-residue protein sequence, read N- to C-terminus: DNA-directed RNA polymerase subunit alpha (337 aa).

An alpha N-terminal domain (alpha-NTD) region spans residues 1-233; sequence MIQKNWQELI…DQLAIFVNFE (233 aa). Residues 249 to 337 are alpha C-terminal domain (alpha-CTD); it reads FNPALLKKVD…DLAKRYEDQY (89 aa).

Belongs to the RNA polymerase alpha chain family. In terms of assembly, homodimer. The RNAP catalytic core consists of 2 alpha, 1 beta, 1 beta' and 1 omega subunit. When a sigma factor is associated with the core the holoenzyme is formed, which can initiate transcription.

The catalysed reaction is RNA(n) + a ribonucleoside 5'-triphosphate = RNA(n+1) + diphosphate. In terms of biological role, DNA-dependent RNA polymerase catalyzes the transcription of DNA into RNA using the four ribonucleoside triphosphates as substrates. This chain is DNA-directed RNA polymerase subunit alpha, found in Brucella anthropi (strain ATCC 49188 / DSM 6882 / CCUG 24695 / JCM 21032 / LMG 3331 / NBRC 15819 / NCTC 12168 / Alc 37) (Ochrobactrum anthropi).